Here is a 1333-residue protein sequence, read N- to C-terminus: NPC1-like intracellular cholesterol transporter 1 (1333 aa).

Residues 1–20 (MAAAWQGWLLWALLLNSAQG) form the signal peptide. Over 21–284 (ELYTPTHKAG…SFYMGRMPGW (264 aa)) the chain is Extracellular. 9 disulfide bridges follow: cysteine 32–cysteine 90, cysteine 38–cysteine 56, cysteine 77–cysteine 125, cysteine 91–cysteine 129, cysteine 113–cysteine 254, cysteine 116–cysteine 172, cysteine 189–cysteine 197, cysteine 243–cysteine 259, and cysteine 256–cysteine 263. Residues 285–305 (LALIIIFTAVFVLLSVVLVYL) form a helical membrane-spanning segment. Residues 306–352 (RVASNRNKNKTAGSQEAPNLPRKRRFSPHTVLGRFFESWGTRVASWP) are Cytoplasmic-facing. The chain crosses the membrane as a helical span at residues 353-373 (LTVLALSFIVVIALSVGLTFI). The Extracellular segment spans residues 374-632 (ELTTDPVELW…DEINRTTIQD (259 aa)). 2 disulfide bridges follow: cysteine 471/cysteine 485 and cysteine 525/cysteine 542. In terms of domain architecture, SSD spans 632–797 (DLPVFAISYL…MTAFVALLSL (166 aa)). Residues 633–653 (LPVFAISYLIVFLYISLALGS) traverse the membrane as a helical segment. Residues 654-665 (YSRWSRVAVDSK) lie on the Cytoplasmic side of the membrane. Residues 666–686 (ATLGLGGVAVVLGAVVAAMGF) form a helical membrane-spanning segment. Residues 687-696 (YSYLGVPSSL) are Extracellular-facing. A helical membrane pass occupies residues 697–717 (VIIQVVPFLVLAVGADNIFIF). At 718–742 (VLEYQRLPRMPGEQREAHIGRTLGS) the chain is on the cytoplasmic side. Residues 743 to 763 (VAPSMLLCSLSEAICFFLGAL) traverse the membrane as a helical segment. The Extracellular portion of the chain corresponds to 764 to 776 (TSMPAVRTFALTS). The chain crosses the membrane as a helical span at residues 777-797 (GLAIIFDFLLQMTAFVALLSL). The Cytoplasmic segment spans residues 798 to 846 (DSKRQEASRPDVVCCFSSRNLPPPKQKEGLLLCFFRKIYTPFLLHRFIR). A helical transmembrane segment spans residues 847–867 (PVVLLLFLVLFGANLYLMCNI). Residues 868–1113 (SVGLDQDLAL…QQYLTVLPEG (246 aa)) lie on the Extracellular side of the membrane. Cystine bridges form between cysteine 920–cysteine 925, cysteine 967–cysteine 1025, and cysteine 981–cysteine 990. The chain crosses the membrane as a helical span at residues 1114 to 1134 (IFTLALCFVPTFVVCYLLLGL). Residues 1135-1142 (DIRSGILN) are Cytoplasmic-facing. Residues 1143-1163 (LLSIIMILVDTIGLMAVWGIS) form a helical membrane-spanning segment. Topologically, residues 1164–1165 (YN) are extracellular. A helical transmembrane segment spans residues 1166–1186 (AVSLINLVTAVGMSVEFVSHI). Residues 1187–1206 (TRSFAVSTKPTRLERAKDAT) are Cytoplasmic-facing. The helical transmembrane segment at 1207–1227 (IFMGSAVFAGVAMTNFPGILI) threads the bilayer. Over 1228–1242 (LGFAQAQLIQIFFFR) the chain is Extracellular. The chain crosses the membrane as a helical span at residues 1243 to 1263 (LNLLITLLGLLHGLVFLPVVL). The Cytoplasmic segment spans residues 1264–1333 (SYLGPDVNQA…SSLPKSDQKF (70 aa)).

Belongs to the patched family. As to quaternary structure, interacts with RAB11A, MYO5B and RAB11FIP2. Interaction with RAB11A, MYO5B and RAB11FIP2 is required for proper transport to the plasma membrane upon cholesterol depletion. Interacts with NPC2. Interacts with LIMA1. Post-translationally, highly glycosylated. Expressed in small intestine, stomach and muscle, along with detectable expression in lung, heart, gall bladder, brain, testis, skin and liver. Expression in liver is extremely low.

Its subcellular location is the apical cell membrane. The protein localises to the cell membrane. The enzyme catalyses cholesterol(in) = cholesterol(out). It catalyses the reaction sitosterol(out) = sitosterol(in). Functionally, plays a major role in cholesterol homeostasis. Critical for the uptake of cholesterol across the plasma membrane of the intestinal enterocyte. Involved in plant sterol absorption, it transports sitosterol, although at lower rates than cholesterol. May have a function in the transport of multiple lipids and their homeostasis, thereby influencing lipid metabolism regulation. May be involved in caveolin trafficking from the plasma membrane. Acts as a negative regulator of NPC2 and down-regulates its expression and secretion by inhibiting its maturation and accelerating its degradation. The polypeptide is NPC1-like intracellular cholesterol transporter 1 (Mus musculus (Mouse)).